The chain runs to 513 residues: Ankyrin repeat domain-containing protein 13C-B (513 aa).

Residues 1 to 19 (MTGEKIRSLHRDQKPSKDE) show a composition bias toward basic and acidic residues. 2 disordered regions span residues 1–34 (MTGE…DGTF) and 55–77 (PSNP…PMTP). Residues 20-29 (DLLEPDEEAT) show a composition bias toward acidic residues. ANK repeat units follow at residues 83-114 (DVYF…QKDN), 115-144 (HGNT…PVKV), and 148-177 (QGWS…QQSR).

It localises to the endoplasmic reticulum membrane. Acts as a molecular chaperone for G protein-coupled receptors, regulating their biogenesis and exit from the ER. The polypeptide is Ankyrin repeat domain-containing protein 13C-B (ankrd13c-b) (Xenopus laevis (African clawed frog)).